Reading from the N-terminus, the 384-residue chain is S-adenosylmethionine synthase (384 aa).

Position 15 (histidine 15) interacts with ATP. Aspartate 17 serves as a coordination point for Mg(2+). Glutamate 43 contributes to the K(+) binding site. Glutamate 56 and glutamine 99 together coordinate L-methionine. Residues 99-109 (QSPDINQGVDR) form a flexible loop region. Residues 164–166 (DAK), 230–231 (RF), aspartate 239, 245–246 (RK), alanine 262, and lysine 266 each bind ATP. Aspartate 239 serves as a coordination point for L-methionine. Lysine 270 lines the L-methionine pocket.

This sequence belongs to the AdoMet synthase family. Homotetramer; dimer of dimers. Requires Mg(2+) as cofactor. It depends on K(+) as a cofactor.

It localises to the cytoplasm. It carries out the reaction L-methionine + ATP + H2O = S-adenosyl-L-methionine + phosphate + diphosphate. It functions in the pathway amino-acid biosynthesis; S-adenosyl-L-methionine biosynthesis; S-adenosyl-L-methionine from L-methionine: step 1/1. In terms of biological role, catalyzes the formation of S-adenosylmethionine (AdoMet) from methionine and ATP. The overall synthetic reaction is composed of two sequential steps, AdoMet formation and the subsequent tripolyphosphate hydrolysis which occurs prior to release of AdoMet from the enzyme. This is S-adenosylmethionine synthase from Salmonella choleraesuis (strain SC-B67).